Here is a 145-residue protein sequence, read N- to C-terminus: UPF0102 protein BAV3162 (145 aa).

This sequence belongs to the UPF0102 family.

The protein is UPF0102 protein BAV3162 of Bordetella avium (strain 197N).